The sequence spans 199 residues: Phosphoheptose isomerase (199 aa).

The SIS domain occupies 36-198 (MAQCLLNEHK…DRKLIPSSED (163 aa)). 51–53 (NGG) provides a ligand contact to substrate. Zn(2+) contacts are provided by H60 and E64. Substrate contacts are provided by residues E64, 93–94 (ND), 119–121 (STS), S124, and Q174. Zn(2+) contacts are provided by Q174 and H182.

It belongs to the SIS family. GmhA subfamily. Homotetramer. It depends on Zn(2+) as a cofactor.

The protein resides in the cytoplasm. It catalyses the reaction 2 D-sedoheptulose 7-phosphate = D-glycero-alpha-D-manno-heptose 7-phosphate + D-glycero-beta-D-manno-heptose 7-phosphate. It participates in carbohydrate biosynthesis; D-glycero-D-manno-heptose 7-phosphate biosynthesis; D-glycero-alpha-D-manno-heptose 7-phosphate and D-glycero-beta-D-manno-heptose 7-phosphate from sedoheptulose 7-phosphate: step 1/1. In terms of biological role, catalyzes the isomerization of sedoheptulose 7-phosphate in D-glycero-D-manno-heptose 7-phosphate. The protein is Phosphoheptose isomerase of Coxiella burnetii (strain CbuK_Q154) (Coxiella burnetii (strain Q154)).